The following is a 796-amino-acid chain: Endonuclease MutS2 (796 aa).

339–346 (GPNTGGKT) is an ATP binding site. The interval 620 to 644 (EKLGDTDSSLVSKAKKNRKQHKPSD) is disordered. The Smr domain maps to 721-796 (LNIIGKRVDE…DHGVTIVEFK (76 aa)).

Belongs to the DNA mismatch repair MutS family. MutS2 subfamily. In terms of assembly, homodimer. Binds to stalled ribosomes, contacting rRNA.

Its function is as follows. Endonuclease that is involved in the suppression of homologous recombination and thus may have a key role in the control of bacterial genetic diversity. Functionally, acts as a ribosome collision sensor, splitting the ribosome into its 2 subunits. Detects stalled/collided 70S ribosomes which it binds and splits by an ATP-hydrolysis driven conformational change. Acts upstream of the ribosome quality control system (RQC), a ribosome-associated complex that mediates the extraction of incompletely synthesized nascent chains from stalled ribosomes and their subsequent degradation. Probably generates substrates for RQC. The chain is Endonuclease MutS2 from Lachnoclostridium phytofermentans (strain ATCC 700394 / DSM 18823 / ISDg) (Clostridium phytofermentans).